Here is a 182-residue protein sequence, read N- to C-terminus: MDAKKYLEEGARARLNLNIEKIIGIADKISSAISSGNKLIVFGNGGSAADAQHFVAELTGHFMKERKPLAAIALTTNTSSITAIANDYSYDVVFSRQVEALAKPGDVVVGISTSGNSKNVIEGIKSAKRIGCHTIAFTGRSGGQLKGVADETLNVDSDLTSIIQEMHITVIHMICAMIDEKF.

Positions 29 to 182 constitute an SIS domain; that stretch reads ISSAISSGNK…MICAMIDEKF (154 aa). 44–46 lines the substrate pocket; that stretch reads NGG. Residues His-53 and Glu-57 each contribute to the Zn(2+) site. Residues Glu-57, 86 to 87, 112 to 114, Ser-117, and Gln-164 contribute to the substrate site; these read ND and STS. Zn(2+) contacts are provided by Gln-164 and His-172.

It belongs to the SIS family. GmhA subfamily. Zn(2+) serves as cofactor.

It localises to the cytoplasm. It carries out the reaction 2 D-sedoheptulose 7-phosphate = D-glycero-alpha-D-manno-heptose 7-phosphate + D-glycero-beta-D-manno-heptose 7-phosphate. Its pathway is carbohydrate biosynthesis; D-glycero-D-manno-heptose 7-phosphate biosynthesis; D-glycero-alpha-D-manno-heptose 7-phosphate and D-glycero-beta-D-manno-heptose 7-phosphate from sedoheptulose 7-phosphate: step 1/1. Catalyzes the isomerization of sedoheptulose 7-phosphate in D-glycero-D-manno-heptose 7-phosphate. This is Probable phosphoheptose isomerase from Thermoplasma acidophilum (strain ATCC 25905 / DSM 1728 / JCM 9062 / NBRC 15155 / AMRC-C165).